A 179-amino-acid chain; its full sequence is Inosine/xanthosine triphosphatase (179 aa).

Glutamate 71 is a Mg(2+) binding site. Residue glutamate 71–alanine 72 participates in substrate binding.

It belongs to the YjjX NTPase family. In terms of assembly, homodimer. It depends on Mg(2+) as a cofactor. Mn(2+) serves as cofactor.

It catalyses the reaction XTP + H2O = XDP + phosphate + H(+). The enzyme catalyses ITP + H2O = IDP + phosphate + H(+). In terms of biological role, phosphatase that hydrolyzes non-canonical purine nucleotides such as XTP and ITP to their respective diphosphate derivatives. Probably excludes non-canonical purines from DNA/RNA precursor pool, thus preventing their incorporation into DNA/RNA and avoiding chromosomal lesions. The protein is Inosine/xanthosine triphosphatase of Shewanella sp. (strain ANA-3).